We begin with the raw amino-acid sequence, 322 residues long: Putative nickel/cobalt efflux system HI_1248 (322 aa).

6 consecutive transmembrane segments (helical) span residues 7 to 27 (GLVLLVIALALLVYFSPWFFL), 54 to 74 (AGTTLIFASFVYGVLHALGPG), 100 to 120 (LSSLMQGIVAITATTLLVVVL), 137 to 157 (TALLLLVFLGCYWIWQGLRAY), 228 to 248 (IFVLFLAYMLDLYSWGILAVL), and 294 to 314 (LIAGGIMLFFALSLLYGTTIS).

Belongs to the NiCoT transporter (TC 2.A.52) family.

It localises to the cell membrane. Its function is as follows. Efflux system for nickel and cobalt. The polypeptide is Putative nickel/cobalt efflux system HI_1248 (Haemophilus influenzae (strain ATCC 51907 / DSM 11121 / KW20 / Rd)).